The chain runs to 502 residues: MVKIQPDEISSIIRQQIAQYSEEVKVVNVGTVFQVGDGIARIYGLEKVMAGELLEFEDGTIGIALNLETKNVGAVLMGDGLAIQEGSSVRATGKIAQIPVSESYLGRVVNSLALPIDGKGAINSSETRLIESLAPGIISRRSVHEPLQTGLVAVDAMIPIGRGQRELIIGDRQTGKTAIAVDTIINQKGKDVICVYVAIGQKASSIAQVVNSLEERGCLSYTIIVAATADTPATLQYLAPYTGATLAEYFMYKGRHTLVIYDDLSKQAQAYREMSLLLRRPPGREAFPGDVFYLHSRLLERAAKLSDQLGGGSMTALPIVETQEGDVSAYIPTNVISITDGQIFLSGDIFNSGIRPAINVGISVSRVGSAAQPKAMKKVAGKLKLELAQFAELEAFSQFASDLDQATQKQLSRGSRLRELLKQAQSSPLALEDQVSTIYAGINGYLDGIPVENVRAFLVELRQYLASSKPKYGQILRDTEAFTEEAESILKEALVELTGSKN.

170–177 is a binding site for ATP; the sequence is GDRQTGKT.

It belongs to the ATPase alpha/beta chains family. As to quaternary structure, F-type ATPases have 2 components, CF(1) - the catalytic core - and CF(0) - the membrane proton channel. CF(1) has five subunits: alpha(3), beta(3), gamma(1), delta(1), epsilon(1). CF(0) has four main subunits: a, b, b' and c.

It localises to the plastid. Its subcellular location is the chloroplast thylakoid membrane. It catalyses the reaction ATP + H2O + 4 H(+)(in) = ADP + phosphate + 5 H(+)(out). In terms of biological role, produces ATP from ADP in the presence of a proton gradient across the membrane. The alpha chain is a regulatory subunit. This Tupiella akineta (Green alga) protein is ATP synthase subunit alpha, chloroplastic.